The chain runs to 964 residues: Cycloisomaltooligosaccharide glucanotransferase (964 aa).

The first 30 residues, 1 to 30, serve as a signal peptide directing secretion; sequence MRVKILPLVFMTLLLIVPSQMLLPSGQANA. CBM6 domains are found at residues 413–538 and 740–863; these read DRYE…LTLG and NMYE…LKLD.

It belongs to the glycosyl hydrolase 66 family.

It carries out the reaction cyclizes part of a (1-&gt;6)-alpha-D-glucan chain by formation of a (1-&gt;6)-alpha-D-glucosidic bond.. Its function is as follows. Produces cycloisomaltooligosaccharide from dextran. This chain is Cycloisomaltooligosaccharide glucanotransferase (cit), found in Niallia circulans (Bacillus circulans).